The chain runs to 126 residues: S-adenosylmethionine decarboxylase proenzyme (126 aa).

Catalysis depends on Ser-63, which acts as the Schiff-base intermediate with substrate; via pyruvic acid. Position 63 is a pyruvic acid (Ser); by autocatalysis (Ser-63). The Proton acceptor; for processing activity role is filled by His-68. Cys-83 (proton donor; for catalytic activity) is an active-site residue.

It belongs to the prokaryotic AdoMetDC family. Type 1 subfamily. Heterotetramer of two alpha and two beta chains arranged as a dimer of alpha/beta heterodimers. Pyruvate serves as cofactor. Post-translationally, is synthesized initially as an inactive proenzyme. Formation of the active enzyme involves a self-maturation process in which the active site pyruvoyl group is generated from an internal serine residue via an autocatalytic post-translational modification. Two non-identical subunits are generated from the proenzyme in this reaction, and the pyruvate is formed at the N-terminus of the alpha chain, which is derived from the carboxyl end of the proenzyme. The post-translation cleavage follows an unusual pathway, termed non-hydrolytic serinolysis, in which the side chain hydroxyl group of the serine supplies its oxygen atom to form the C-terminus of the beta chain, while the remainder of the serine residue undergoes an oxidative deamination to produce ammonia and the pyruvoyl group blocking the N-terminus of the alpha chain.

The enzyme catalyses S-adenosyl-L-methionine + H(+) = S-adenosyl 3-(methylsulfanyl)propylamine + CO2. Its pathway is amine and polyamine biosynthesis; S-adenosylmethioninamine biosynthesis; S-adenosylmethioninamine from S-adenosyl-L-methionine: step 1/1. Catalyzes the decarboxylation of S-adenosylmethionine to S-adenosylmethioninamine (dcAdoMet), the propylamine donor required for the synthesis of the polyamines spermine and spermidine from the diamine putrescine. This is S-adenosylmethionine decarboxylase proenzyme from Oceanobacillus iheyensis (strain DSM 14371 / CIP 107618 / JCM 11309 / KCTC 3954 / HTE831).